The chain runs to 167 residues: HVA22-like protein b (167 aa).

3 helical membrane passes run 18 to 38 (VIAG…RAIE), 47 to 67 (QWLT…TFFR), and 68 to 88 (LLEW…WLVL).

The protein belongs to the DP1 family. Predominantly expressed in flower buds.

The protein resides in the membrane. The chain is HVA22-like protein b (HVA22B) from Arabidopsis thaliana (Mouse-ear cress).